A 613-amino-acid chain; its full sequence is Laccase 1 (613 aa).

Residues 1 to 20 form the signal peptide; the sequence is MSSSVRLLLIVALLYTNSWA. Plastocyanin-like domains are found at residues 29-142, 171-359, and 468-598; these read ITWE…IRPK, YLVV…MRVP, and DATC…ILDG. The N-linked (GlcNAc...) asparagine glycan is linked to Asn74. The Cu cation site is built by His78, His80, His122, and His124. 3 N-linked (GlcNAc...) asparagine glycosylation sites follow: Asn256, Asn279, and Asn484. Residues His506, His509, and His511 each coordinate Cu cation. Asn526 is a glycosylation site (N-linked (GlcNAc...) asparagine). 4 residues coordinate Cu cation: His580, Cys581, His582, and His586.

This sequence belongs to the multicopper oxidase family. It depends on Cu cation as a cofactor.

The protein resides in the cell surface. Its pathway is pigment biosynthesis. Its function is as follows. Laccase; part of the Pks1 gene cluster that mediates the biosynthesis of an anthraquinone derivative pigment that contributes to conidial pigmentation that provides protection from UV radiation, heat and cold stress. The polyketide synthase Pks1 produces 1-acetyl-2,4,6,8-tetrahydroxy-9,10-anthraquinone though condensation of acetyl-CoA with malonyl-CoA. The dehydratase EthD and the laccase Mlac1 further convert the anthraquinone derivative into the final conidial pigment. The protein is Laccase 1 of Metarhizium acridum (strain CQMa 102).